The primary structure comprises 458 residues: Mitochondrial-processing peptidase subunit beta (458 aa).

Residues 1 to 41 (MYRRLASGLYQTSQRRIAQVQPKSVFVPETIVTTLPNGFRV) constitute a mitochondrion transit peptide. Residue His-73 participates in Zn(2+) binding. Glu-76 functions as the Proton acceptor in the catalytic mechanism. 2 residues coordinate Zn(2+): His-77 and Glu-153.

This sequence belongs to the peptidase M16 family. In terms of assembly, heterodimer of mppa-1 (alpha) and mppb-1 (beta) subunits, forming the mitochondrial processing protease (MPP) in which mppa-1 is involved in substrate recognition and binding and mppb-1 is the catalytic subunit. Requires Zn(2+) as cofactor.

Its subcellular location is the mitochondrion matrix. The enzyme catalyses Release of N-terminal transit peptides from precursor proteins imported into the mitochondrion, typically with Arg in position P2.. Binding to mppa-1 is required for catalytic activity. Inhibited by metal chelator ethylenediaminetetraacetic acid (EDTA). Functionally, catalytic subunit of the essential mitochondrial processing protease (MPP), which cleaves the mitochondrial sequence off newly imported precursors proteins. Preferentially, cleaves after an arginine at position P2. This Caenorhabditis elegans protein is Mitochondrial-processing peptidase subunit beta.